We begin with the raw amino-acid sequence, 554 residues long: Sesquiterpene synthase 14b (554 aa).

Residues aspartate 305, aspartate 309, aspartate 449, and glutamate 457 each contribute to the Mg(2+) site. A DDXXD motif motif is present at residues 305–309 (DDLYD).

It belongs to the terpene synthase family. Tpsa subfamily. Requires Mg(2+) as cofactor. It depends on Mn(2+) as a cofactor.

The catalysed reaction is (2E,6E)-farnesyl diphosphate = (E)-gamma-bisabolene + diphosphate. It catalyses the reaction (2Z,6Z)-farnesyl diphosphate = (E)-gamma-bisabolene + diphosphate. The enzyme catalyses (2Z,6Z)-farnesyl diphosphate = (E)-alpha-bisabolene + diphosphate. It carries out the reaction (2Z,6Z)-farnesyl diphosphate = (Z)-beta-farnesene + diphosphate. The catalysed reaction is (2E,6E)-farnesyl diphosphate = (E)-beta-farnesene + diphosphate. It catalyses the reaction (2E,6E)-farnesyl diphosphate = (+)-thujopsene + diphosphate. The enzyme catalyses (2Z,6Z)-farnesyl diphosphate = (E)-beta-farnesene + diphosphate. It carries out the reaction (2E,6E)-farnesyl diphosphate = (Z)-beta-farnesene + diphosphate. The catalysed reaction is (2Z,6Z)-farnesyl diphosphate = beta-acoradiene + diphosphate. It catalyses the reaction (2Z,6Z)-farnesyl diphosphate = alpha-acoradiene + diphosphate. The enzyme catalyses (2Z,6Z)-farnesyl diphosphate = beta-bisabolene + diphosphate. It carries out the reaction (2E,6E)-farnesyl diphosphate = (-)-alpha-cedrene + diphosphate. The catalysed reaction is (2E,6E)-farnesyl diphosphate = beta-bisabolene + diphosphate. It catalyses the reaction (2E,6E)-farnesyl diphosphate = beta-acoradiene + diphosphate. The enzyme catalyses (2Z,6Z)-farnesyl diphosphate = (-)-alpha-cedrene + diphosphate. It carries out the reaction (2E)-geranyl diphosphate = terpinolene + diphosphate. The catalysed reaction is (2E)-geranyl diphosphate = limonene + diphosphate. It catalyses the reaction (2E)-geranyl diphosphate = beta-myrcene + diphosphate. The protein operates within secondary metabolite biosynthesis; terpenoid biosynthesis. Sesquiterpene synthase involved in the biosynthesis of volatile compounds. Mediates the conversion of (2E,6E)-farnesyl diphosphate ((EE)-FPP) into (+)-thujopsene, beta-bisabolene, alpha-cederene, beta-acoradiene, (E)-gamma-bisabolene, (Z)-alpha-bisabolene, (Z)-beta-farnesene and (E)-beta-farnesene, and of (2Z,6Z)-farnesyl diphosphate ((ZZ)-FPP) into (E)-gamma-bisabolene, (E)-alpha-bisabolene, (E)-beta-farnesene, (Z)-beta-farnesene, beta-bisabolene, beta-acoradiene and alpha-acoradiene. Can act with a low efficiency as a monoterpene synthase with geranyl diphosphate (GPP) as substrate, thus producing beta-myrcene, limonene and terpinolene. The sequence is that of Sesquiterpene synthase 14b from Solanum habrochaites (Wild tomato).